Reading from the N-terminus, the 226-residue chain is UPF0758 protein PputW619_0186 (226 aa).

Residues 102 to 224 (ALESPSAVRR…PLSMVEQGWI (123 aa)) form the MPN domain. 3 residues coordinate Zn(2+): H173, H175, and D186. Residues 173-186 (HNHPSGNSEPSQDD) carry the JAMM motif motif.

Belongs to the UPF0758 family.

The protein is UPF0758 protein PputW619_0186 of Pseudomonas putida (strain W619).